The primary structure comprises 930 residues: Type I restriction enzyme SsaAORF53P endonuclease subunit (930 aa).

Residues 254–418 (HQATETSNNG…DGRSTADIFG (165 aa)) enclose the Helicase ATP-binding domain. 268–274 (TTGSGKT) lines the ATP pocket.

The protein belongs to the HsdR family. In terms of assembly, the type I restriction/modification system is composed of three polypeptides R, M and S.

The catalysed reaction is Endonucleolytic cleavage of DNA to give random double-stranded fragments with terminal 5'-phosphates, ATP is simultaneously hydrolyzed.. In terms of biological role, the restriction (R) subunit of a type I restriction enzyme that recognizes an undetermined sequence and cleaves a random distance away. Subunit R is required for both nuclease and ATPase activities, but not for modification. After locating a non-methylated recognition site, the enzyme complex serves as a molecular motor that translocates DNA in an ATP-dependent manner until a collision occurs that triggers cleavage. This chain is Type I restriction enzyme SsaAORF53P endonuclease subunit, found in Staphylococcus saprophyticus subsp. saprophyticus (strain ATCC 15305 / DSM 20229 / NCIMB 8711 / NCTC 7292 / S-41).